Reading from the N-terminus, the 336-residue chain is UPF0324 membrane protein BR0028/BS1330_I0028 (336 aa).

The next 11 membrane-spanning stretches (helical) occupy residues 9-26 (ILPG…AMVL), 36-55 (RAWL…VRSL), 68-90 (FSAK…ASAV), 94-116 (GSGL…YGIG), 128-150 (LVAC…VIGA), 160-182 (AFTA…LLGL), 189-211 (ILAG…VSLL), 221-240 (LVRV…ISGN), 247-269 (PGFF…LHSL), 279-301 (AIQY…GVDI), and 313-335 (LTAI…MLGV).

The protein belongs to the UPF0324 family.

It localises to the cell membrane. The protein is UPF0324 membrane protein BR0028/BS1330_I0028 of Brucella suis biovar 1 (strain 1330).